A 193-amino-acid polypeptide reads, in one-letter code: Peptidyl-tRNA hydrolase (193 aa).

Y14 lines the tRNA pocket. H19 (proton acceptor) is an active-site residue. TRNA contacts are provided by F64, N66, and N112.

Belongs to the PTH family. As to quaternary structure, monomer.

It is found in the cytoplasm. The catalysed reaction is an N-acyl-L-alpha-aminoacyl-tRNA + H2O = an N-acyl-L-amino acid + a tRNA + H(+). Functionally, hydrolyzes ribosome-free peptidyl-tRNAs (with 1 or more amino acids incorporated), which drop off the ribosome during protein synthesis, or as a result of ribosome stalling. Its function is as follows. Catalyzes the release of premature peptidyl moieties from peptidyl-tRNA molecules trapped in stalled 50S ribosomal subunits, and thus maintains levels of free tRNAs and 50S ribosomes. The chain is Peptidyl-tRNA hydrolase from Bartonella quintana (strain Toulouse) (Rochalimaea quintana).